The chain runs to 354 residues: Putative F-box/kelch-repeat protein At5g03000 (354 aa).

The F-box domain maps to 37–86 (PTVFSSLPDELILNCLARVSRFYRPSLSLVNKEFQSLIASPDLEATRSRI). 2 Kelch repeats span residues 143–189 (EIYI…VIDG) and 190–236 (KIYV…FPGK).

This is Putative F-box/kelch-repeat protein At5g03000 from Arabidopsis thaliana (Mouse-ear cress).